The primary structure comprises 100 residues: Large ribosomal subunit protein bL21 (100 aa).

Belongs to the bacterial ribosomal protein bL21 family. In terms of assembly, part of the 50S ribosomal subunit. Contacts protein L20.

In terms of biological role, this protein binds to 23S rRNA in the presence of protein L20. The polypeptide is Large ribosomal subunit protein bL21 (Wolbachia sp. subsp. Brugia malayi (strain TRS)).